Consider the following 245-residue polypeptide: Orotidine 5'-phosphate decarboxylase (245 aa).

Substrate contacts are provided by residues D22, K44, 71-80, T131, R192, Q201, G221, and R222; that span reads DLKFHDIPNT. K73 functions as the Proton donor in the catalytic mechanism.

Belongs to the OMP decarboxylase family. Type 1 subfamily. Homodimer.

The enzyme catalyses orotidine 5'-phosphate + H(+) = UMP + CO2. Its pathway is pyrimidine metabolism; UMP biosynthesis via de novo pathway; UMP from orotate: step 2/2. In terms of biological role, catalyzes the decarboxylation of orotidine 5'-monophosphate (OMP) to uridine 5'-monophosphate (UMP). The protein is Orotidine 5'-phosphate decarboxylase of Klebsiella pneumoniae (strain 342).